The primary structure comprises 229 residues: Ribonuclease 3 (229 aa).

The RNase III domain maps to L5 to G127. Residue E40 participates in Mg(2+) binding. D44 is a catalytic residue. D113 and E116 together coordinate Mg(2+). The active site involves E116. A DRBM domain is found at D154–V224.

The protein belongs to the ribonuclease III family. Homodimer. It depends on Mg(2+) as a cofactor.

Its subcellular location is the cytoplasm. It carries out the reaction Endonucleolytic cleavage to 5'-phosphomonoester.. Functionally, digests double-stranded RNA. Involved in the processing of primary rRNA transcript to yield the immediate precursors to the large and small rRNAs (23S and 16S). Processes some mRNAs, and tRNAs when they are encoded in the rRNA operon. Processes pre-crRNA and tracrRNA of type II CRISPR loci if present in the organism. This is Ribonuclease 3 from Pseudomonas fluorescens (strain Pf0-1).